A 364-amino-acid chain; its full sequence is tRNA 2-selenouridine synthase (364 aa).

A Rhodanese domain is found at 14–137 (LIADTPIIDV…LRQTTIQATI (124 aa)). Catalysis depends on Cys97, which acts as the S-selanylcysteine intermediate.

It belongs to the SelU family. As to quaternary structure, monomer.

The enzyme catalyses 5-methylaminomethyl-2-thiouridine(34) in tRNA + selenophosphate + (2E)-geranyl diphosphate + H2O + H(+) = 5-methylaminomethyl-2-selenouridine(34) in tRNA + (2E)-thiogeraniol + phosphate + diphosphate. The catalysed reaction is 5-methylaminomethyl-2-thiouridine(34) in tRNA + (2E)-geranyl diphosphate = 5-methylaminomethyl-S-(2E)-geranyl-thiouridine(34) in tRNA + diphosphate. It carries out the reaction 5-methylaminomethyl-S-(2E)-geranyl-thiouridine(34) in tRNA + selenophosphate + H(+) = 5-methylaminomethyl-2-(Se-phospho)selenouridine(34) in tRNA + (2E)-thiogeraniol. It catalyses the reaction 5-methylaminomethyl-2-(Se-phospho)selenouridine(34) in tRNA + H2O = 5-methylaminomethyl-2-selenouridine(34) in tRNA + phosphate. Its function is as follows. Involved in the post-transcriptional modification of the uridine at the wobble position (U34) of tRNA(Lys), tRNA(Glu) and tRNA(Gln). Catalyzes the conversion of 2-thiouridine (S2U-RNA) to 2-selenouridine (Se2U-RNA). Acts in a two-step process involving geranylation of 2-thiouridine (S2U) to S-geranyl-2-thiouridine (geS2U) and subsequent selenation of the latter derivative to 2-selenouridine (Se2U) in the tRNA chain. This is tRNA 2-selenouridine synthase from Escherichia coli (strain 55989 / EAEC).